Consider the following 100-residue polypeptide: Large ribosomal subunit protein uL23 (100 aa).

Belongs to the universal ribosomal protein uL23 family. Part of the 50S ribosomal subunit. Contacts protein L29, and trigger factor when it is bound to the ribosome.

Its function is as follows. One of the early assembly proteins it binds 23S rRNA. One of the proteins that surrounds the polypeptide exit tunnel on the outside of the ribosome. Forms the main docking site for trigger factor binding to the ribosome. This Edwardsiella ictaluri (strain 93-146) protein is Large ribosomal subunit protein uL23.